Consider the following 176-residue polypeptide: Large ribosomal subunit protein uL6 (176 aa).

It belongs to the universal ribosomal protein uL6 family. Part of the 50S ribosomal subunit.

This protein binds to the 23S rRNA, and is important in its secondary structure. It is located near the subunit interface in the base of the L7/L12 stalk, and near the tRNA binding site of the peptidyltransferase center. The sequence is that of Large ribosomal subunit protein uL6 from Burkholderia vietnamiensis (strain G4 / LMG 22486) (Burkholderia cepacia (strain R1808)).